A 423-amino-acid chain; its full sequence is Histidine--tRNA ligase (423 aa).

It belongs to the class-II aminoacyl-tRNA synthetase family. In terms of assembly, homodimer.

It localises to the cytoplasm. It carries out the reaction tRNA(His) + L-histidine + ATP = L-histidyl-tRNA(His) + AMP + diphosphate + H(+). The polypeptide is Histidine--tRNA ligase (Actinobacillus succinogenes (strain ATCC 55618 / DSM 22257 / CCUG 43843 / 130Z)).